Reading from the N-terminus, the 510-residue chain is NAD(P)H-quinone oxidoreductase subunit 2 A, chloroplastic (510 aa).

A run of 13 helical transmembrane segments spans residues 24–44 (LLLF…GLIL), 57–77 (IPWL…ALLF), 99–119 (IFQF…VEYI), 124–144 (MAIT…MFLC), 149–169 (LITI…LSGY), 183–203 (YLLM…WLYG), 227–247 (PGIS…LSPA), 295–315 (WHLL…LIAI), 323–343 (MLAY…IVGD), 354–374 (YMLF…LFGL), 395–415 (ALSL…AGFF), 418–438 (LYLF…IGLL), and 484–504 (MIVC…IIAI).

This sequence belongs to the complex I subunit 2 family. In terms of assembly, NDH is composed of at least 16 different subunits, 5 of which are encoded in the nucleus.

The protein localises to the plastid. It localises to the chloroplast thylakoid membrane. It catalyses the reaction a plastoquinone + NADH + (n+1) H(+)(in) = a plastoquinol + NAD(+) + n H(+)(out). The enzyme catalyses a plastoquinone + NADPH + (n+1) H(+)(in) = a plastoquinol + NADP(+) + n H(+)(out). NDH shuttles electrons from NAD(P)H:plastoquinone, via FMN and iron-sulfur (Fe-S) centers, to quinones in the photosynthetic chain and possibly in a chloroplast respiratory chain. The immediate electron acceptor for the enzyme in this species is believed to be plastoquinone. Couples the redox reaction to proton translocation, and thus conserves the redox energy in a proton gradient. This Solanum tuberosum (Potato) protein is NAD(P)H-quinone oxidoreductase subunit 2 A, chloroplastic.